Consider the following 181-residue polypeptide: Crossover junction endodeoxyribonuclease RuvC (181 aa).

Residues aspartate 7, glutamate 67, and aspartate 139 contribute to the active site. Residues aspartate 7, glutamate 67, and aspartate 139 each coordinate Mg(2+).

It belongs to the RuvC family. As to quaternary structure, homodimer which binds Holliday junction (HJ) DNA. The HJ becomes 2-fold symmetrical on binding to RuvC with unstacked arms; it has a different conformation from HJ DNA in complex with RuvA. In the full resolvosome a probable DNA-RuvA(4)-RuvB(12)-RuvC(2) complex forms which resolves the HJ. The cofactor is Mg(2+).

It is found in the cytoplasm. The enzyme catalyses Endonucleolytic cleavage at a junction such as a reciprocal single-stranded crossover between two homologous DNA duplexes (Holliday junction).. The RuvA-RuvB-RuvC complex processes Holliday junction (HJ) DNA during genetic recombination and DNA repair. Endonuclease that resolves HJ intermediates. Cleaves cruciform DNA by making single-stranded nicks across the HJ at symmetrical positions within the homologous arms, yielding a 5'-phosphate and a 3'-hydroxyl group; requires a central core of homology in the junction. The consensus cleavage sequence is 5'-(A/T)TT(C/G)-3'. Cleavage occurs on the 3'-side of the TT dinucleotide at the point of strand exchange. HJ branch migration catalyzed by RuvA-RuvB allows RuvC to scan DNA until it finds its consensus sequence, where it cleaves and resolves the cruciform DNA. The sequence is that of Crossover junction endodeoxyribonuclease RuvC from Cupriavidus pinatubonensis (strain JMP 134 / LMG 1197) (Cupriavidus necator (strain JMP 134)).